The primary structure comprises 226 residues: ATP synthase subunit a (226 aa).

7 consecutive transmembrane segments (helical) span residues F18–A38, V44–A64, L79–F99, S105–I125, F137–F157, F177–L197, and L202–V222.

It belongs to the ATPase A chain family. F-type ATPases have 2 components, CF(1) - the catalytic core - and CF(0) - the membrane proton channel. CF(1) has five subunits: alpha(3), beta(3), gamma(1), delta(1), epsilon(1). CF(0) has three main subunits: a(1), b(2) and c(9-12). The alpha and beta chains form an alternating ring which encloses part of the gamma chain. CF(1) is attached to CF(0) by a central stalk formed by the gamma and epsilon chains, while a peripheral stalk is formed by the delta and b chains.

The protein resides in the cell inner membrane. Its function is as follows. Key component of the proton channel; it plays a direct role in the translocation of protons across the membrane. The polypeptide is ATP synthase subunit a (Helicobacter hepaticus (strain ATCC 51449 / 3B1)).